The primary structure comprises 172 residues: Shikimate kinase (172 aa).

Residue Gly11–Thr16 coordinates ATP. Ser15 lines the Mg(2+) pocket. Positions 33, 57, and 79 each coordinate substrate. ATP is bound at residue Arg117. Arg136 lines the substrate pocket. Residue Arg153 coordinates ATP.

This sequence belongs to the shikimate kinase family. Monomer. Mg(2+) serves as cofactor.

The protein localises to the cytoplasm. The catalysed reaction is shikimate + ATP = 3-phosphoshikimate + ADP + H(+). It participates in metabolic intermediate biosynthesis; chorismate biosynthesis; chorismate from D-erythrose 4-phosphate and phosphoenolpyruvate: step 5/7. Catalyzes the specific phosphorylation of the 3-hydroxyl group of shikimic acid using ATP as a cosubstrate. The polypeptide is Shikimate kinase (Pseudomonas savastanoi pv. phaseolicola (strain 1448A / Race 6) (Pseudomonas syringae pv. phaseolicola (strain 1448A / Race 6))).